The chain runs to 237 residues: Uridylate kinase (237 aa).

K11 to G14 lines the ATP pocket. G53 serves as a coordination point for UMP. Residues G54 and R58 each coordinate ATP. Residues D73 and T134–T141 each bind UMP. Residues T161, Y167, and D170 each contribute to the ATP site.

This sequence belongs to the UMP kinase family. Homohexamer.

The protein localises to the cytoplasm. It catalyses the reaction UMP + ATP = UDP + ADP. It participates in pyrimidine metabolism; CTP biosynthesis via de novo pathway; UDP from UMP (UMPK route): step 1/1. With respect to regulation, inhibited by UTP. In terms of biological role, catalyzes the reversible phosphorylation of UMP to UDP. In Burkholderia thailandensis (strain ATCC 700388 / DSM 13276 / CCUG 48851 / CIP 106301 / E264), this protein is Uridylate kinase.